The chain runs to 315 residues: tRNA dimethylallyltransferase (315 aa).

Residue 14 to 21 (GPTASGKT) participates in ATP binding. 16–21 (TASGKT) provides a ligand contact to substrate. 3 interaction with substrate tRNA regions span residues 39-42 (DSAL), 163-167 (QRIQR), and 248-253 (RCVGYR).

It belongs to the IPP transferase family. Monomer. Requires Mg(2+) as cofactor.

It catalyses the reaction adenosine(37) in tRNA + dimethylallyl diphosphate = N(6)-dimethylallyladenosine(37) in tRNA + diphosphate. Its function is as follows. Catalyzes the transfer of a dimethylallyl group onto the adenine at position 37 in tRNAs that read codons beginning with uridine, leading to the formation of N6-(dimethylallyl)adenosine (i(6)A). The sequence is that of tRNA dimethylallyltransferase from Paraburkholderia phytofirmans (strain DSM 17436 / LMG 22146 / PsJN) (Burkholderia phytofirmans).